The sequence spans 159 residues: Aspartate carbamoyltransferase regulatory chain (159 aa).

Zn(2+) is bound by residues C113, C118, C142, and C145.

It belongs to the PyrI family. Contains catalytic and regulatory chains. Zn(2+) serves as cofactor.

Involved in allosteric regulation of aspartate carbamoyltransferase. This Saccharolobus islandicus (strain Y.N.15.51 / Yellowstone #2) (Sulfolobus islandicus) protein is Aspartate carbamoyltransferase regulatory chain.